Here is a 77-residue protein sequence, read N- to C-terminus: MAGRKGGRAKRRKVCFFTANGITRIDYKDVDLLKRFVSERGKILPRRVTGTSAKYQRKLTVAIKRARQMALLPYVGE.

Belongs to the bacterial ribosomal protein bS18 family. Part of the 30S ribosomal subunit. Forms a tight heterodimer with protein bS6.

Functionally, binds as a heterodimer with protein bS6 to the central domain of the 16S rRNA, where it helps stabilize the platform of the 30S subunit. The polypeptide is Small ribosomal subunit protein bS18 (Bacillus cereus (strain ATCC 10987 / NRS 248)).